A 289-amino-acid chain; its full sequence is Serine/threonine-protein phosphatase PGAM5, mitochondrial (289 aa).

The Mitochondrial matrix segment spans residues 1-6 (MAFRQA). A helical membrane pass occupies residues 7–29 (LQLAACGLAGGSAAVLFSAVAVG). The Mitochondrial intermembrane portion of the chain corresponds to 30 to 289 (KPRAGGDAEP…FMPPDKITRS (260 aa)). The disordered stretch occupies residues 32 to 59 (RAGGDAEPRPAEPPAWAGGARPGPGVWD). Residues 45–56 (PAWAGGARPGPG) are compositionally biased toward low complexity. An interaction with KEAP1 region spans residues 77–82 (NVESGE). 2 positions are modified to phosphoserine: Ser-80 and Ser-87. N6-acetyllysine is present on residues Lys-116, Lys-144, and Lys-191.

The protein belongs to the phosphoglycerate mutase family. BPG-dependent PGAM subfamily. Dimer. Forms a ternary complex with NFE2L2 and KEAP1. Interacts with BCL2L1 and MAP3K5. Upon TNF-induced necrosis, forms in complex with RIPK1, RIPK3 and MLKL; the formation of this complex leads to PGAM5 phosphorylation. Isoform 2, but not isoform 1, interacts with DNM1L; this interaction leads to DNM1L dephosphorylation and activation and eventually to mitochondria fragmentation. Post-translationally, both isoform 1 and isoform 2 are phosphorylated by the RIPK1/RIPK3 complex under necrotic conditions. This phosphorylation increases PGAM5 phosphatase activity. Proteolytically cleaved by PARL in response to loss of mitochondrial membrane potential.

The protein localises to the mitochondrion outer membrane. It is found in the mitochondrion inner membrane. The catalysed reaction is O-phospho-L-seryl-[protein] + H2O = L-seryl-[protein] + phosphate. It carries out the reaction O-phospho-L-threonyl-[protein] + H2O = L-threonyl-[protein] + phosphate. Mitochondrial serine/threonine phosphatase that dephosphorylates various substrates and thus plays a role in different biological processes including cellular senescence or mitophagy. Modulates cellular senescence by regulating mitochondrial dynamics. Mechanistically, participates in mitochondrial fission through dephosphorylating DNM1L/DRP1. Additionally, dephosphorylates MFN2 in a stress-sensitive manner and consequently protects it from ubiquitination and degradation to promote mitochondrial network formation. Regulates mitophagy independent of PARKIN by interacting with and dephosphorylating FUNDC1, which interacts with LC3. Regulates anti-oxidative response by forming a tertiary complex with KEAP1 and NRF2. Regulates necroptosis by acting as a RIPK3 target and recruiting the RIPK1-RIPK3-MLKL necrosis 'attack' complex to mitochondria. The polypeptide is Serine/threonine-protein phosphatase PGAM5, mitochondrial (PGAM5) (Homo sapiens (Human)).